Here is a 190-residue protein sequence, read N- to C-terminus: Elongation factor P (190 aa).

The residue at position 34 (K34) is an N6-(3,6-diaminohexanoyl)-5-hydroxylysine.

It belongs to the elongation factor P family. In terms of processing, may be beta-lysylated on the epsilon-amino group of Lys-34 by the combined action of EpmA and EpmB, and then hydroxylated on the C5 position of the same residue by EpmC (if this protein is present). Lysylation is critical for the stimulatory effect of EF-P on peptide-bond formation. The lysylation moiety may extend toward the peptidyltransferase center and stabilize the terminal 3-CCA end of the tRNA. Hydroxylation of the C5 position on Lys-34 may allow additional potential stabilizing hydrogen-bond interactions with the P-tRNA.

It is found in the cytoplasm. It participates in protein biosynthesis; polypeptide chain elongation. Functionally, involved in peptide bond synthesis. Alleviates ribosome stalling that occurs when 3 or more consecutive Pro residues or the sequence PPG is present in a protein, possibly by augmenting the peptidyl transferase activity of the ribosome. Modification of Lys-34 is required for alleviation. The protein is Elongation factor P of Hahella chejuensis (strain KCTC 2396).